The sequence spans 250 residues: 5-oxoprolinase subunit A (250 aa).

This sequence belongs to the LamB/PxpA family. In terms of assembly, forms a complex composed of PxpA, PxpB and PxpC.

The enzyme catalyses 5-oxo-L-proline + ATP + 2 H2O = L-glutamate + ADP + phosphate + H(+). Catalyzes the cleavage of 5-oxoproline to form L-glutamate coupled to the hydrolysis of ATP to ADP and inorganic phosphate. The sequence is that of 5-oxoprolinase subunit A from Staphylococcus aureus (strain bovine RF122 / ET3-1).